The primary structure comprises 508 residues: Photosystem II CP47 reaction center protein (508 aa).

The next 6 helical transmembrane spans lie at 21–36 (SVHLMHTALVSGWAGS), 101–115 (IILSGLLFLAAIWHW), 140–156 (GVHLFLSGALCLAFGVF), 203–218 (IAAGLLGLIAGGFHVL), 237–252 (VLSSSIAAVFWSAFVV), and 457–472 (SFALIFFFGHIWHGAR).

It belongs to the PsbB/PsbC family. PsbB subfamily. As to quaternary structure, PSII is composed of 1 copy each of membrane proteins PsbA, PsbB, PsbC, PsbD, PsbE, PsbF, PsbH, PsbI, PsbJ, PsbK, PsbL, PsbM, PsbT, PsbY, PsbZ, Psb30/Ycf12, at least 3 peripheral proteins of the oxygen-evolving complex and a large number of cofactors. It forms dimeric complexes. Binds multiple chlorophylls. PSII binds additional chlorophylls, carotenoids and specific lipids. serves as cofactor.

The protein localises to the plastid. The protein resides in the chloroplast thylakoid membrane. In terms of biological role, one of the components of the core complex of photosystem II (PSII). It binds chlorophyll and helps catalyze the primary light-induced photochemical processes of PSII. PSII is a light-driven water:plastoquinone oxidoreductase, using light energy to abstract electrons from H(2)O, generating O(2) and a proton gradient subsequently used for ATP formation. In Euglena gracilis, this protein is Photosystem II CP47 reaction center protein.